We begin with the raw amino-acid sequence, 158 residues long: Endoribonuclease YbeY (158 aa).

Residues histidine 118, histidine 122, and histidine 128 each contribute to the Zn(2+) site.

This sequence belongs to the endoribonuclease YbeY family. Zn(2+) is required as a cofactor.

The protein localises to the cytoplasm. In terms of biological role, single strand-specific metallo-endoribonuclease involved in late-stage 70S ribosome quality control and in maturation of the 3' terminus of the 16S rRNA. The chain is Endoribonuclease YbeY from Haemophilus ducreyi (strain 35000HP / ATCC 700724).